We begin with the raw amino-acid sequence, 70 residues long: Melittin (70 aa).

A signal peptide spans 1-21; it reads MKFLVNVALVFMVVYISYIYA. The propeptide at 22 to 43 is removed by a dipeptidylpeptidase; the sequence is APEPEPAPEPEAEADAEADPEA. The residue at position 44 (Gly-44) is an N-formylglycine; partial. Position 69 is a glutamine amide (Gln-69).

Belongs to the melittin family. Monomer (in solution and for integration into membranes), homotetramer (in solution and potentially as a toroidal pore in membranes), and potenially homomultimer (as a toroidal pore in membranes). In terms of tissue distribution, expressed by the venom gland.

The protein resides in the secreted. It is found in the target cell membrane. Melittin: Main toxin of bee venom with strong antimicrobial activity and hemolytic activity. It has enhancing effects on bee venom phospholipase A2 activity. This amphipathic toxin binds to negatively charged membrane surface and forms pore by inserting into lipid bilayers inducing the leakage of ions and molecules and the enhancement of permeability that ultimately leads to cell lysis. It acts as a voltage-gated pore with higher selectivity for anions over cations. The ion conductance has been shown to be voltage-dependent. Self-association of melittin in membranes is promoted by high ionic strength, but not by the presence of negatively charged lipids. In vivo, intradermal injection into healthy human volunteers produce sharp pain sensation and an inflammatory response. It produces pain by activating primary nociceptor cells directly and indirectly due to its ability to activate plasma membrane phospholipase A2 and its pore-forming activity. In the context of inflammation and cancer tests, is highly cytotoxic to normal cells, highly induces calcium signaling and almost completely prevents cAMP production. In addition, prevents LPS-induced nitric oxid (NO) synthesis but does not affect the IP3 signaling and pro-inflammatory activation of endothelial cells. Also shows significant antiproliferative activity on the breast cancer cell line MDA-MB-231. Functionally, melittin-S: 1.4-fold less hemolytic and adopts a less organized secondary structure than melittin. In terms of biological role, melittin-2: Has strong hemolytic activity. The sequence is that of Melittin (MELT) from Apis mellifera (Honeybee).